Consider the following 395-residue polypeptide: MFKKLFTSESVTEGHPDKMCDQISDAILDAILEKDPAARVACETSVSTGLVLVAGEITTKCYVDIPKIVRKTIEEIGYTRAKYGFDSDTCAVLTAINEQSADIALGVDEALESKKGEHRDELEAIGAGDQGIMFGFACNETPELMPLPISLAHKLAKRLSDVRKDGTIGYLRPDGKTQVTVEYDGDKPVRVDTIVISTQHGPEVDAATIEKDMIEHVVQKIVPAELLDENTRYFINPTGRFVIGGPQGDAGLTGRKIIVDTYGGYARHGGGAFSGKDATKVDRSAAYAARYVAKNIVAAGLADKCEIELAYAIGVSRPISILVETFGTGKIAEADIAELIGKHFDLRPAAIIRDLGLRNPGYRNVAAYGHFGRADLDLTWERTDKAELLRKEAGL.

Residue His15 coordinates ATP. Asp17 is a Mg(2+) binding site. Glu43 provides a ligand contact to K(+). The L-methionine site is built by Glu56 and Gln99. The interval 99–109 (QSADIALGVDE) is flexible loop. Residues 174–176 (DGK), 240–241 (RF), Asp249, 255–256 (RK), Ala272, and Lys276 contribute to the ATP site. Residue Asp249 participates in L-methionine binding. Lys280 is a binding site for L-methionine.

Belongs to the AdoMet synthase family. Homotetramer; dimer of dimers. Mg(2+) serves as cofactor. The cofactor is K(+).

It localises to the cytoplasm. It carries out the reaction L-methionine + ATP + H2O = S-adenosyl-L-methionine + phosphate + diphosphate. The protein operates within amino-acid biosynthesis; S-adenosyl-L-methionine biosynthesis; S-adenosyl-L-methionine from L-methionine: step 1/1. In terms of biological role, catalyzes the formation of S-adenosylmethionine (AdoMet) from methionine and ATP. The overall synthetic reaction is composed of two sequential steps, AdoMet formation and the subsequent tripolyphosphate hydrolysis which occurs prior to release of AdoMet from the enzyme. The protein is S-adenosylmethionine synthase of Alkaliphilus oremlandii (strain OhILAs) (Clostridium oremlandii (strain OhILAs)).